A 244-amino-acid chain; its full sequence is Protein crossbronx (244 aa).

Positions 20–176 constitute a UBC core domain; that stretch reads QQEYKILAEY…VLENIKESKE (157 aa).

It belongs to the ubiquitin-conjugating enzyme family. FTS subfamily.

This chain is Protein crossbronx (cbx), found in Drosophila persimilis (Fruit fly).